An 890-amino-acid polypeptide reads, in one-letter code: DNA mismatch repair protein MutS (890 aa).

ATP is bound at residue 607-614 (GPNMSGKS). Residues 832 to 851 (ESQLSFFGTEQSSKKQDKPV) are disordered.

It belongs to the DNA mismatch repair MutS family.

Functionally, this protein is involved in the repair of mismatches in DNA. It is possible that it carries out the mismatch recognition step. This protein has a weak ATPase activity. The sequence is that of DNA mismatch repair protein MutS from Bacillus cereus (strain 03BB102).